The primary structure comprises 208 residues: uncharacterized protein (208 aa).

4 consecutive 4Fe-4S ferredoxin-type domains span residues 59-88 (GVLVTQRARCTGCHRCEISCTNFNDGSVGT), 114-145 (GDLNYTADTCRQCKEPQCMNVCPIGAITWQQK), 147-176 (GCITVDHKRCIGCSACTTACPWMMATVNTE), and 174-203 (NTESKKSSKCVLCGECANACPTGALKIIEW). 16 residues coordinate [4Fe-4S] cluster: Cys-68, Cys-71, Cys-74, Cys-78, Cys-123, Cys-126, Cys-131, Cys-135, Cys-156, Cys-159, Cys-162, Cys-166, Cys-183, Cys-186, Cys-189, and Cys-193.

This is an uncharacterized protein from Escherichia coli O157:H7.